We begin with the raw amino-acid sequence, 425 residues long: Phosphoribosylamine--glycine ligase (425 aa).

Positions 109–315 (KALMQEAGIP…LEELILACVQ (207 aa)) constitute an ATP-grasp domain. 135–195 (IQAQGAPIVV…EECLTGQEVS (61 aa)) contacts ATP. Mg(2+) is bound by residues Glu285 and Asn287.

This sequence belongs to the GARS family. The cofactor is Mg(2+). It depends on Mn(2+) as a cofactor.

The catalysed reaction is 5-phospho-beta-D-ribosylamine + glycine + ATP = N(1)-(5-phospho-beta-D-ribosyl)glycinamide + ADP + phosphate + H(+). It participates in purine metabolism; IMP biosynthesis via de novo pathway; N(1)-(5-phospho-D-ribosyl)glycinamide from 5-phospho-alpha-D-ribose 1-diphosphate: step 2/2. The polypeptide is Phosphoribosylamine--glycine ligase (Nostoc sp. (strain PCC 7120 / SAG 25.82 / UTEX 2576)).